A 139-amino-acid polypeptide reads, in one-letter code: Large-conductance mechanosensitive channel (139 aa).

2 helical membrane passes run valine 14–leucine 34 and glycine 86–isoleucine 106.

The protein belongs to the MscL family. Homopentamer.

The protein resides in the cell inner membrane. Its function is as follows. Channel that opens in response to stretch forces in the membrane lipid bilayer. May participate in the regulation of osmotic pressure changes within the cell. This Methylobacillus flagellatus (strain ATCC 51484 / DSM 6875 / VKM B-1610 / KT) protein is Large-conductance mechanosensitive channel.